A 93-amino-acid polypeptide reads, in one-letter code: Small ribosomal subunit protein bS16 (93 aa).

Belongs to the bacterial ribosomal protein bS16 family.

This is Small ribosomal subunit protein bS16 from Opitutus terrae (strain DSM 11246 / JCM 15787 / PB90-1).